We begin with the raw amino-acid sequence, 200 residues long: Holliday junction branch migration complex subunit RuvA (200 aa).

Residues 1-64 (MIGHLRGIIV…EDAHTLYGFH (64 aa)) are domain I. The tract at residues 65 to 143 (NDHERRLFRA…RWHTNDTPSP (79 aa)) is domain II. Residues 133-152 (SRWHTNDTPSPEGLRSSNTQ) are disordered. Positions 144–148 (EGLRS) are flexible linker. Residues 149 to 200 (SNTQPTQDAISALMALGYKPQEAKRAIDAIQKPDLSAETLIRLALKQMVLGT) are domain III.

It belongs to the RuvA family. As to quaternary structure, homotetramer. Forms an RuvA(8)-RuvB(12)-Holliday junction (HJ) complex. HJ DNA is sandwiched between 2 RuvA tetramers; dsDNA enters through RuvA and exits via RuvB. An RuvB hexamer assembles on each DNA strand where it exits the tetramer. Each RuvB hexamer is contacted by two RuvA subunits (via domain III) on 2 adjacent RuvB subunits; this complex drives branch migration. In the full resolvosome a probable DNA-RuvA(4)-RuvB(12)-RuvC(2) complex forms which resolves the HJ.

The protein resides in the cytoplasm. Functionally, the RuvA-RuvB-RuvC complex processes Holliday junction (HJ) DNA during genetic recombination and DNA repair, while the RuvA-RuvB complex plays an important role in the rescue of blocked DNA replication forks via replication fork reversal (RFR). RuvA specifically binds to HJ cruciform DNA, conferring on it an open structure. The RuvB hexamer acts as an ATP-dependent pump, pulling dsDNA into and through the RuvAB complex. HJ branch migration allows RuvC to scan DNA until it finds its consensus sequence, where it cleaves and resolves the cruciform DNA. This chain is Holliday junction branch migration complex subunit RuvA, found in Coxiella burnetii (strain CbuK_Q154) (Coxiella burnetii (strain Q154)).